A 302-amino-acid polypeptide reads, in one-letter code: Sulfate adenylyltransferase subunit 2 (302 aa).

Residues 280–302 form a disordered region; it reads RQGRLIDSDQSASMEQKKRQGYF.

It belongs to the PAPS reductase family. CysD subfamily. In terms of assembly, heterodimer composed of CysD, the smaller subunit, and CysN.

The catalysed reaction is sulfate + ATP + H(+) = adenosine 5'-phosphosulfate + diphosphate. The protein operates within sulfur metabolism; hydrogen sulfide biosynthesis; sulfite from sulfate: step 1/3. Functionally, with CysN forms the ATP sulfurylase (ATPS) that catalyzes the adenylation of sulfate producing adenosine 5'-phosphosulfate (APS) and diphosphate, the first enzymatic step in sulfur assimilation pathway. APS synthesis involves the formation of a high-energy phosphoric-sulfuric acid anhydride bond driven by GTP hydrolysis by CysN coupled to ATP hydrolysis by CysD. This Shewanella oneidensis (strain ATCC 700550 / JCM 31522 / CIP 106686 / LMG 19005 / NCIMB 14063 / MR-1) protein is Sulfate adenylyltransferase subunit 2.